We begin with the raw amino-acid sequence, 400 residues long: Enoyl-[acyl-carrier-protein] reductase [NADH] 2 (400 aa).

NAD(+) is bound by residues 48-53, 75-76, 112-113, and 141-142; these read GASSGF, FE, DA, and LA. Residue Y228 participates in substrate binding. Y238 (proton donor) is an active-site residue. NAD(+)-binding positions include K247 and 276 to 278; that span reads LVT.

This sequence belongs to the TER reductase family. As to quaternary structure, monomer.

The catalysed reaction is a 2,3-saturated acyl-[ACP] + NAD(+) = a (2E)-enoyl-[ACP] + NADH + H(+). Its pathway is lipid metabolism; fatty acid biosynthesis. Functionally, involved in the final reduction of the elongation cycle of fatty acid synthesis (FAS II). Catalyzes the reduction of a carbon-carbon double bond in an enoyl moiety that is covalently linked to an acyl carrier protein (ACP). The polypeptide is Enoyl-[acyl-carrier-protein] reductase [NADH] 2 (Vibrio vulnificus (strain YJ016)).